A 231-amino-acid polypeptide reads, in one-letter code: Putative N-acetylmannosamine-6-phosphate 2-epimerase (231 aa).

Belongs to the NanE family.

It carries out the reaction an N-acyl-D-glucosamine 6-phosphate = an N-acyl-D-mannosamine 6-phosphate. The protein operates within amino-sugar metabolism; N-acetylneuraminate degradation; D-fructose 6-phosphate from N-acetylneuraminate: step 3/5. In terms of biological role, converts N-acetylmannosamine-6-phosphate (ManNAc-6-P) to N-acetylglucosamine-6-phosphate (GlcNAc-6-P). The chain is Putative N-acetylmannosamine-6-phosphate 2-epimerase from Listeria innocua serovar 6a (strain ATCC BAA-680 / CLIP 11262).